The chain runs to 339 residues: Glyceraldehyde-3-phosphate dehydrogenase (339 aa).

NAD(+) is bound by residues 12–13 (RI), aspartate 34, arginine 78, and threonine 120. D-glyceraldehyde 3-phosphate-binding positions include 149-151 (SCT), threonine 180, 209-210 (TG), and arginine 232. Catalysis depends on cysteine 150, which acts as the Nucleophile. Residue asparagine 319 coordinates NAD(+).

This sequence belongs to the glyceraldehyde-3-phosphate dehydrogenase family. In terms of assembly, homotetramer.

It is found in the cytoplasm. It catalyses the reaction D-glyceraldehyde 3-phosphate + phosphate + NAD(+) = (2R)-3-phospho-glyceroyl phosphate + NADH + H(+). It functions in the pathway carbohydrate degradation; glycolysis; pyruvate from D-glyceraldehyde 3-phosphate: step 1/5. Its function is as follows. Catalyzes the oxidative phosphorylation of glyceraldehyde 3-phosphate (G3P) to 1,3-bisphosphoglycerate (BPG) using the cofactor NAD. The first reaction step involves the formation of a hemiacetal intermediate between G3P and a cysteine residue, and this hemiacetal intermediate is then oxidized to a thioester, with concomitant reduction of NAD to NADH. The reduced NADH is then exchanged with the second NAD, and the thioester is attacked by a nucleophilic inorganic phosphate to produce BPG. In Haemophilus influenzae (strain ATCC 51907 / DSM 11121 / KW20 / Rd), this protein is Glyceraldehyde-3-phosphate dehydrogenase (gapA).